The primary structure comprises 286 residues: 4-diphosphocytidyl-2-C-methyl-D-erythritol kinase (286 aa).

Residue Lys-12 is part of the active site. 96-106 (PHGAGLGGGSA) is a binding site for ATP. The active site involves Asp-138.

The protein belongs to the GHMP kinase family. IspE subfamily.

It carries out the reaction 4-CDP-2-C-methyl-D-erythritol + ATP = 4-CDP-2-C-methyl-D-erythritol 2-phosphate + ADP + H(+). The protein operates within isoprenoid biosynthesis; isopentenyl diphosphate biosynthesis via DXP pathway; isopentenyl diphosphate from 1-deoxy-D-xylulose 5-phosphate: step 3/6. Catalyzes the phosphorylation of the position 2 hydroxy group of 4-diphosphocytidyl-2C-methyl-D-erythritol. This Nitratidesulfovibrio vulgaris (strain ATCC 29579 / DSM 644 / CCUG 34227 / NCIMB 8303 / VKM B-1760 / Hildenborough) (Desulfovibrio vulgaris) protein is 4-diphosphocytidyl-2-C-methyl-D-erythritol kinase.